Reading from the N-terminus, the 274-residue chain is Large ribosomal subunit protein uL2 (274 aa).

Disordered regions lie at residues 38–57 (KRTGGRNNNGHITTRHVGGG) and 224–256 (AMNPIDHPHGGGEGRNKGIQPVSPWGQKAKGYK). The span at 229-239 (DHPHGGGEGRN) shows a compositional bias: basic and acidic residues.

The protein belongs to the universal ribosomal protein uL2 family. In terms of assembly, part of the 50S ribosomal subunit. Forms a bridge to the 30S subunit in the 70S ribosome.

In terms of biological role, one of the primary rRNA binding proteins. Required for association of the 30S and 50S subunits to form the 70S ribosome, for tRNA binding and peptide bond formation. It has been suggested to have peptidyltransferase activity; this is somewhat controversial. Makes several contacts with the 16S rRNA in the 70S ribosome. The polypeptide is Large ribosomal subunit protein uL2 (Acinetobacter baumannii (strain AB307-0294)).